The chain runs to 222 residues: Urease accessory protein UreF (222 aa).

It belongs to the UreF family. UreD, UreF and UreG form a complex that acts as a GTP-hydrolysis-dependent molecular chaperone, activating the urease apoprotein by helping to assemble the nickel containing metallocenter of UreC. The UreE protein probably delivers the nickel.

It is found in the cytoplasm. Its function is as follows. Required for maturation of urease via the functional incorporation of the urease nickel metallocenter. This Hahella chejuensis (strain KCTC 2396) protein is Urease accessory protein UreF.